Reading from the N-terminus, the 234-residue chain is MTIYLTELDSTLYFPSPEEALTEPNGLLAIGGDLSPARLLTAYYNGIFPWFSPYQPILWWSPDPRGVLPVAQLHISRSLRKTLNKTSLRFTVNHAFMDVVTACAAPRRYSEDTWITSEFMQSYAVLHEMGQAHSVEVWDNDQLVGGLYGLSVGKLFCGESMFHRQTDASKLALVALCRHLSRYDAPLIDCQMQNSYLETMGVQEWPRAEFLRQLAQLREQSFPAECWQPQVLTL.

It belongs to the L/F-transferase family.

It localises to the cytoplasm. It carries out the reaction N-terminal L-lysyl-[protein] + L-leucyl-tRNA(Leu) = N-terminal L-leucyl-L-lysyl-[protein] + tRNA(Leu) + H(+). The catalysed reaction is N-terminal L-arginyl-[protein] + L-leucyl-tRNA(Leu) = N-terminal L-leucyl-L-arginyl-[protein] + tRNA(Leu) + H(+). It catalyses the reaction L-phenylalanyl-tRNA(Phe) + an N-terminal L-alpha-aminoacyl-[protein] = an N-terminal L-phenylalanyl-L-alpha-aminoacyl-[protein] + tRNA(Phe). Functions in the N-end rule pathway of protein degradation where it conjugates Leu, Phe and, less efficiently, Met from aminoacyl-tRNAs to the N-termini of proteins containing an N-terminal arginine or lysine. The protein is Leucyl/phenylalanyl-tRNA--protein transferase of Tolumonas auensis (strain DSM 9187 / NBRC 110442 / TA 4).